We begin with the raw amino-acid sequence, 138 residues long: Acidic phospholipase A2 jerdoxin (138 aa).

Positions methionine 1–glycine 16 are cleaved as a signal peptide. Intrachain disulfides connect cysteine 42–cysteine 131, cysteine 44–cysteine 60, cysteine 59–cysteine 111, cysteine 65–cysteine 138, cysteine 66–cysteine 104, cysteine 73–cysteine 97, and cysteine 91–cysteine 102. Positions 43, 45, and 47 each coordinate Ca(2+). Histidine 63 is a catalytic residue. Aspartate 64 is a binding site for Ca(2+). Residue aspartate 105 is part of the active site.

It belongs to the phospholipase A2 family. Group II subfamily. D49 sub-subfamily. Monomer. It depends on Ca(2+) as a cofactor. As to expression, expressed by the venom gland.

It is found in the secreted. It carries out the reaction a 1,2-diacyl-sn-glycero-3-phosphocholine + H2O = a 1-acyl-sn-glycero-3-phosphocholine + a fatty acid + H(+). Snake venom phospholipase A2 (PLA2) that displays edema-inducing activities, exhibits indirect hemolytic activity, and inhibits ADP-induced platelet aggregation. PLA2 catalyzes the calcium-dependent hydrolysis of the 2-acyl groups in 3-sn-phosphoglycerides. The chain is Acidic phospholipase A2 jerdoxin from Protobothrops jerdonii (Jerdon's pitviper).